The following is a 119-amino-acid chain: Beta-2-microglobulin (119 aa).

The signal sequence occupies residues 1 to 20; the sequence is MARLVVVALLVLLCLSGLEA. Positions 25 to 114 constitute an Ig-like C1-type domain; it reads PKIQVYSRHP…VTFTAPKTVK (90 aa). A disulfide bond links C45 and C100.

Belongs to the beta-2-microglobulin family. As to quaternary structure, heterodimer of an alpha chain and a beta chain. Beta-2-microglobulin is the beta-chain of major histocompatibility complex class I molecules.

It localises to the secreted. Component of the class I major histocompatibility complex (MHC). Involved in the presentation of peptide antigens to the immune system. The protein is Beta-2-microglobulin (B2M) of Chiropotes satanas (Brown-bearded saki).